The following is a 510-amino-acid chain: Light-independent protochlorophyllide reductase subunit B (510 aa).

Asp36 contributes to the [4Fe-4S] cluster binding site. Asp296 functions as the Proton donor in the catalytic mechanism. 431-432 (GM) provides a ligand contact to substrate.

Belongs to the ChlB/BchB/BchZ family. As to quaternary structure, protochlorophyllide reductase is composed of three subunits; ChlL, ChlN and ChlB. Forms a heterotetramer of two ChlB and two ChlN subunits. [4Fe-4S] cluster serves as cofactor.

Its subcellular location is the plastid. It localises to the chloroplast. It carries out the reaction chlorophyllide a + oxidized 2[4Fe-4S]-[ferredoxin] + 2 ADP + 2 phosphate = protochlorophyllide a + reduced 2[4Fe-4S]-[ferredoxin] + 2 ATP + 2 H2O. Its pathway is porphyrin-containing compound metabolism; chlorophyll biosynthesis (light-independent). Its function is as follows. Component of the dark-operative protochlorophyllide reductase (DPOR) that uses Mg-ATP and reduced ferredoxin to reduce ring D of protochlorophyllide (Pchlide) to form chlorophyllide a (Chlide). This reaction is light-independent. The NB-protein (ChlN-ChlB) is the catalytic component of the complex. This Physcomitrium patens (Spreading-leaved earth moss) protein is Light-independent protochlorophyllide reductase subunit B.